Here is a 347-residue protein sequence, read N- to C-terminus: Protein-glutamate methylesterase/protein-glutamine glutaminase 2 (347 aa).

A Response regulatory domain is found at 2–119 (RVMIVDDSAV…LGGADLYRKD (118 aa)). Residue Asp-52 is modified to 4-aspartylphosphate. The interval 131 to 153 (AARPAPPQAAPRPTLAPPSSDPA) is disordered. Residues 134–150 (PAPPQAAPRPTLAPPSS) are compositionally biased toward pro residues. Positions 152–346 (PAGPIEAVVV…PYIASRARSV (195 aa)) constitute a CheB-type methylesterase domain. Active-site residues include Ser-164, His-191, and Asp-288.

The protein belongs to the CheB family. Phosphorylated by CheA. Phosphorylation of the N-terminal regulatory domain activates the methylesterase activity.

The protein localises to the cytoplasm. It catalyses the reaction [protein]-L-glutamate 5-O-methyl ester + H2O = L-glutamyl-[protein] + methanol + H(+). It carries out the reaction L-glutaminyl-[protein] + H2O = L-glutamyl-[protein] + NH4(+). Involved in chemotaxis. Part of a chemotaxis signal transduction system that modulates chemotaxis in response to various stimuli. Catalyzes the demethylation of specific methylglutamate residues introduced into the chemoreceptors (methyl-accepting chemotaxis proteins or MCP) by CheR. Also mediates the irreversible deamidation of specific glutamine residues to glutamic acid. In Caulobacter vibrioides (strain ATCC 19089 / CIP 103742 / CB 15) (Caulobacter crescentus), this protein is Protein-glutamate methylesterase/protein-glutamine glutaminase 2.